The chain runs to 314 residues: MTQPLRIVFAGTPEFAAQHLQALLDAGKSIVAVYTQPDRPAGRGQKLMPSPVKQLAVQHDIPVLQPQTLRDPAAQAELAALQADLMVVVAYGLILPQAVLDLPRLGCINSHASLLPRWRGAAPIQRAIEAGDSESGVTVMQMEAGLDTGPMLLKVNTPISDEDTGGSLHDRLALLGAHAVVKAVDALAAGTLTPEVQDDSLATYAHKLSKDEARVDWTRPAVELERLIRAFNPWPICHSTLNGETLKIHAAQLGEGRGVPGLILDASKAGLTVACGEGALSLTRLQLPGGKPLGFGDLYNSRREQFAPGLVLGQ.

113–116 serves as a coordination point for (6S)-5,6,7,8-tetrahydrofolate; sequence SLLP.

Belongs to the Fmt family.

The catalysed reaction is L-methionyl-tRNA(fMet) + (6R)-10-formyltetrahydrofolate = N-formyl-L-methionyl-tRNA(fMet) + (6S)-5,6,7,8-tetrahydrofolate + H(+). Functionally, attaches a formyl group to the free amino group of methionyl-tRNA(fMet). The formyl group appears to play a dual role in the initiator identity of N-formylmethionyl-tRNA by promoting its recognition by IF2 and preventing the misappropriation of this tRNA by the elongation apparatus. The sequence is that of Methionyl-tRNA formyltransferase from Stutzerimonas stutzeri (strain A1501) (Pseudomonas stutzeri).